A 499-amino-acid polypeptide reads, in one-letter code: MPDRVRIFDTTLRDGEQTPGVSLTVEEKVEIARKLDEFGVDTIEAGFPVASEGEFEAVRAIAGEELDAEICGLARCVKGDIDAAIDADVDCVHVFIATSDIHLRYKLEMSREEALERAIEGVEYASDHGVTVEFSAEDATRTDRDYLLEVYKATVEAGADRVNVPDTVGVMTPPEMYRLTAEVVDAVDVPVSVHCHNDFGMAVANSLAAVEAGAEQVHVTVNGIGERAGNASLEQVVMALKALYDIELDVRTEMLVELSRLVERLTGVVVPPNTPIVGENAFAHESGIHSHGVIKKAETYEPIRPEDVGHRRRIVLGKHAGRHAIKKKLEEMGIEVTEEQLDEIVRRVKELGDKGKRVTEDDLEAIARDVVGEVPESEAAVKLEEIAVMTGNKFTPTASVRVYLDGEEHEAASTGVGSVDAAIRALREAIEELGMDVELKEYRLEAITGGTDALAEVTVRLEDEDGNVTTARGAAEDIVMASVKAFVRGVNRLARRRRD.

Positions 5–256 (VRIFDTTLRD…ELDVRTEMLV (252 aa)) constitute a Pyruvate carboxyltransferase domain. Positions 14, 194, 196, and 230 each coordinate a divalent metal cation.

It belongs to the alpha-IPM synthase/homocitrate synthase family. In terms of assembly, homodimer. Requires a divalent metal cation as cofactor.

It carries out the reaction 3-methyl-2-oxobutanoate + acetyl-CoA + H2O = (2S)-2-isopropylmalate + CoA + H(+). The protein operates within amino-acid biosynthesis; L-leucine biosynthesis; L-leucine from 3-methyl-2-oxobutanoate: step 1/4. Functionally, catalyzes the condensation of the acetyl group of acetyl-CoA with 3-methyl-2-oxobutanoate (2-oxoisovalerate) to form 3-carboxy-3-hydroxy-4-methylpentanoate (2-isopropylmalate). This is Probable 2-isopropylmalate synthase (leuA) from Methanopyrus kandleri (strain AV19 / DSM 6324 / JCM 9639 / NBRC 100938).